Here is a 116-residue protein sequence, read N- to C-terminus: MTSSNFPKAERLLRRPEFLQFNEGASKLHTQHFLVLLKLKEGTGTRVGFTVSKKVGNAVVRNSIKRRLREFYRQNKSLFILADINIVAKKGADVLDFQQISTELAAAFGRLRKKYA.

The protein belongs to the RnpA family. Consists of a catalytic RNA component (M1 or rnpB) and a protein subunit.

It carries out the reaction Endonucleolytic cleavage of RNA, removing 5'-extranucleotides from tRNA precursor.. In terms of biological role, RNaseP catalyzes the removal of the 5'-leader sequence from pre-tRNA to produce the mature 5'-terminus. It can also cleave other RNA substrates such as 4.5S RNA. The protein component plays an auxiliary but essential role in vivo by binding to the 5'-leader sequence and broadening the substrate specificity of the ribozyme. This chain is Ribonuclease P protein component, found in Geobacter sp. (strain M21).